The following is a 178-amino-acid chain: MDSQGPIILEKSIKIEEVIKIANTSIIDIVTKTVTPEIKAPYELVDVEYDKMGSDYILSILVDKEDGITVEDTSDLTNIISPLLDTIDPDPFPNQYMLEVSSPGLERPLKTADSLKAAVGSYINVSLYQAIDKVKVFQGDLLAFDGETLTIDYLDKTRHKIVNIPYQAVAKVRMAVKL.

Belongs to the RimP family.

The protein localises to the cytoplasm. In terms of biological role, required for maturation of 30S ribosomal subunits. This chain is Ribosome maturation factor RimP, found in Streptococcus pyogenes serotype M3 (strain ATCC BAA-595 / MGAS315).